Reading from the N-terminus, the 566-residue chain is Oxygen-dependent choline dehydrogenase (566 aa).

Position 7-36 (7-36 (DYIICGAGSAGNVLATRLTEDPNVTVLLLE)) interacts with FAD. The interval 183–203 (QQEGFGPMDRTVTPKGRRAST) is disordered. His474 acts as the Proton acceptor in catalysis.

This sequence belongs to the GMC oxidoreductase family. Requires FAD as cofactor.

The catalysed reaction is choline + A = betaine aldehyde + AH2. The enzyme catalyses betaine aldehyde + NAD(+) + H2O = glycine betaine + NADH + 2 H(+). It functions in the pathway amine and polyamine biosynthesis; betaine biosynthesis via choline pathway; betaine aldehyde from choline (cytochrome c reductase route): step 1/1. In terms of biological role, involved in the biosynthesis of the osmoprotectant glycine betaine. Catalyzes the oxidation of choline to betaine aldehyde and betaine aldehyde to glycine betaine at the same rate. This is Oxygen-dependent choline dehydrogenase from Burkholderia ambifaria (strain ATCC BAA-244 / DSM 16087 / CCUG 44356 / LMG 19182 / AMMD) (Burkholderia cepacia (strain AMMD)).